The following is a 255-amino-acid chain: Pre-miRNA 5'-monophosphate methyltransferase (255 aa).

Residues Arg-32, Asn-66, Asp-96, 121–122 (DI), and Met-150 each bind S-adenosyl-L-methionine. Residues 41 to 253 (LHKLFRKPAE…SLLLFKIQRH (213 aa)) form the Bin3-type SAM domain.

The protein belongs to the methyltransferase superfamily.

It localises to the cytoplasm. The catalysed reaction is a 5'-end 5'-phospho-ribonucleoside-RNA + S-adenosyl-L-methionine = a 5'-end (5'-methylphospho)-ribonucleoside-RNA + S-adenosyl-L-homocysteine. The enzyme catalyses a 5'-end 5'-phospho-ribonucleoside-RNA + 2 S-adenosyl-L-methionine = a 5'-end (5'-bismethylphospho)-ribonucleoside-RNA + 2 S-adenosyl-L-homocysteine. In terms of biological role, O-methyltransferase that specifically monomethylates 5'-monophosphate of cytoplasmic histidyl tRNA (tRNA(His)), acting as a capping enzyme by protecting tRNA(His) from cleavage by DICER1. Also able, with less efficiently, to methylate the 5' monophosphate of a subset of pre-miRNAs, acting as a negative regulator of miRNA processing. The 5' monophosphate of pre-miRNAs is recognized by DICER1 and is required for pre-miRNAs processing: methylation at this position reduces the processing of pre-miRNAs by DICER1. Was also reported to mediate dimethylation of pre-miR-145; however dimethylation cannot be reproduced by another group which observes a monomethylation of pre-miR-145. The polypeptide is Pre-miRNA 5'-monophosphate methyltransferase (bcdin3d) (Xenopus laevis (African clawed frog)).